Reading from the N-terminus, the 354-residue chain is UDP-N-acetylglucosamine--N-acetylmuramyl-(pentapeptide) pyrophosphoryl-undecaprenol N-acetylglucosamine transferase (354 aa).

UDP-N-acetyl-alpha-D-glucosamine contacts are provided by residues 14-16 (TGG), Asn126, Arg162, Ser190, Ile243, 262-267 (ALTVSE), and Gln287.

This sequence belongs to the glycosyltransferase 28 family. MurG subfamily.

It localises to the cell inner membrane. The enzyme catalyses di-trans,octa-cis-undecaprenyl diphospho-N-acetyl-alpha-D-muramoyl-L-alanyl-D-glutamyl-meso-2,6-diaminopimeloyl-D-alanyl-D-alanine + UDP-N-acetyl-alpha-D-glucosamine = di-trans,octa-cis-undecaprenyl diphospho-[N-acetyl-alpha-D-glucosaminyl-(1-&gt;4)]-N-acetyl-alpha-D-muramoyl-L-alanyl-D-glutamyl-meso-2,6-diaminopimeloyl-D-alanyl-D-alanine + UDP + H(+). It participates in cell wall biogenesis; peptidoglycan biosynthesis. Cell wall formation. Catalyzes the transfer of a GlcNAc subunit on undecaprenyl-pyrophosphoryl-MurNAc-pentapeptide (lipid intermediate I) to form undecaprenyl-pyrophosphoryl-MurNAc-(pentapeptide)GlcNAc (lipid intermediate II). This chain is UDP-N-acetylglucosamine--N-acetylmuramyl-(pentapeptide) pyrophosphoryl-undecaprenol N-acetylglucosamine transferase, found in Photobacterium profundum (strain SS9).